The following is a 90-amino-acid chain: Probable Fe(2+)-trafficking protein (90 aa).

The protein belongs to the Fe(2+)-trafficking protein family.

Its function is as follows. Could be a mediator in iron transactions between iron acquisition and iron-requiring processes, such as synthesis and/or repair of Fe-S clusters in biosynthetic enzymes. This chain is Probable Fe(2+)-trafficking protein, found in Aeromonas hydrophila subsp. hydrophila (strain ATCC 7966 / DSM 30187 / BCRC 13018 / CCUG 14551 / JCM 1027 / KCTC 2358 / NCIMB 9240 / NCTC 8049).